The primary structure comprises 538 residues: Pyruvate kinase (538 aa).

Ser45 bears the Phosphoserine mark. Residue Arg72 participates in substrate binding. Asn74, Ser76, Asp107, and Thr108 together coordinate K(+). ATP is bound at residue 74-77 (NFSH). Positions 114 and 200 each coordinate ATP. Glu265 is a Mg(2+) binding site. Residues Gly288, Asp289, and Thr321 each contribute to the substrate site. Asp289 serves as a coordination point for Mg(2+).

Belongs to the pyruvate kinase family. Homotetramer. Requires Mg(2+) as cofactor. The cofactor is K(+).

It carries out the reaction pyruvate + ATP = phosphoenolpyruvate + ADP + H(+). Its pathway is carbohydrate degradation; glycolysis; pyruvate from D-glyceraldehyde 3-phosphate: step 5/5. The protein is Pyruvate kinase (pki1) of Hypocrea jecorina (Trichoderma reesei).